We begin with the raw amino-acid sequence, 145 residues long: Putative type I specificity subunit S.MpnORF289P C-terminus (145 aa).

It belongs to the type-I restriction system S methylase family. As to quaternary structure, the methyltransferase is composed of M and S polypeptides.

Its function is as follows. The C-terminal section of a specificity (S) subunit of a type I methyltransferase (MTase); this subunit dictates DNA sequence specificity. The single R subunit has multiple frameshifts and is probably not expressed. The protein is Putative type I specificity subunit S.MpnORF289P C-terminus of Mycoplasma pneumoniae (strain ATCC 29342 / M129 / Subtype 1) (Mycoplasmoides pneumoniae).